Consider the following 374-residue polypeptide: MSETLNLLKQLIERPSITPNDAGCQTILIDRLKSVGFQCEHLPFGEVHNFWAWHGHQSPFIIFAGHTDVVPPGDETQWHSPPFTPTEKNGYIYGRGAADMKSGLAAMVVAAENFVKQNPDHNGTIGFIVTSDEEGPAENGTQKVVDYLQQKNIKLDYCIVGEASSNEKLGDAIKIGRRGSMHGELTIIGKQGHIAYPHLADNPIHRSFQAFEALAKTKWDEGNEHFTPTSFQFYNVEAGAGAANVIPATLKAKFNFRFAPIHTTQQLQQKVERILNYYQLNYDIQWNVSSQPFFSGNGRLATFVRQAIQEICHLNTEPNTYGGTSDGRFIATTGCEVIELGPVNKTAHHVNENICIADLEKLTDIYFRTLQLLT.

His-66 is a Zn(2+) binding site. Residue Asp-68 is part of the active site. Asp-99 is a Zn(2+) binding site. Residue Glu-133 is the Proton acceptor of the active site. Zn(2+) contacts are provided by Glu-134, Glu-162, and His-348.

This sequence belongs to the peptidase M20A family. DapE subfamily. Homodimer. The cofactor is Zn(2+). Requires Co(2+) as cofactor.

It catalyses the reaction N-succinyl-(2S,6S)-2,6-diaminopimelate + H2O = (2S,6S)-2,6-diaminopimelate + succinate. It participates in amino-acid biosynthesis; L-lysine biosynthesis via DAP pathway; LL-2,6-diaminopimelate from (S)-tetrahydrodipicolinate (succinylase route): step 3/3. Its function is as follows. Catalyzes the hydrolysis of N-succinyl-L,L-diaminopimelic acid (SDAP), forming succinate and LL-2,6-diaminopimelate (DAP), an intermediate involved in the bacterial biosynthesis of lysine and meso-diaminopimelic acid, an essential component of bacterial cell walls. This Coxiella burnetii (strain CbuK_Q154) (Coxiella burnetii (strain Q154)) protein is Succinyl-diaminopimelate desuccinylase.